The chain runs to 493 residues: NADH-quinone oxidoreductase subunit N 2 (493 aa).

Helical transmembrane passes span Ile16–Ile36, Phe45–Gln65, Gly87–Ser107, Gly119–Thr139, Leu141–Phe161, Leu176–Ile196, Val219–Phe239, Leu258–Leu278, Trp285–Ile305, Leu313–Asn333, Ile340–Ala360, Ala385–Leu405, Gly421–Val441, and Cys464–Leu484.

The protein belongs to the complex I subunit 2 family. As to quaternary structure, NDH-1 is composed of 14 different subunits. Subunits NuoA, H, J, K, L, M, N constitute the membrane sector of the complex.

The protein resides in the cell inner membrane. The catalysed reaction is a quinone + NADH + 5 H(+)(in) = a quinol + NAD(+) + 4 H(+)(out). NDH-1 shuttles electrons from NADH, via FMN and iron-sulfur (Fe-S) centers, to quinones in the respiratory chain. The immediate electron acceptor for the enzyme in this species is believed to be ubiquinone. Couples the redox reaction to proton translocation (for every two electrons transferred, four hydrogen ions are translocated across the cytoplasmic membrane), and thus conserves the redox energy in a proton gradient. The sequence is that of NADH-quinone oxidoreductase subunit N 2 from Solibacter usitatus (strain Ellin6076).